Reading from the N-terminus, the 100-residue chain is Conantokin-G (100 aa).

An N-terminal signal peptide occupies residues 1–21 (MHLYTYLYLLVPLVTFHLILG). A propeptide spanning residues 22–80 (TGTLDDGGALTERRSADATALKAEPVLLQKSAARSTDDNGKDRLTQMKRILKQRGNKAR) is cleaved from the precursor. The segment at 52–100 (SAARSTDDNGKDRLTQMKRILKQRGNKARGEEELQENQELIREKSNGKR) is disordered. Positions 56–66 (STDDNGKDRLT) are enriched in basic and acidic residues. A gamma-carboxylation recognition sequence that plays a role in the conversion of Glu to carboxy-Glu (Gla) region spans residues 61 to 80 (GKDRLTQMKRILKQRGNKAR). An a divalent metal cation-binding site is contributed by Glu83. 4-carboxyglutamate occurs at positions 83, 84, 87, 90, and 94. Glu87, Glu90, and Glu94 together coordinate a divalent metal cation. Residues 90-100 (ELIREKSNGKR) show a composition bias toward basic and acidic residues. At Asn97 the chain carries Asparagine amide.

The protein belongs to the conotoxin B superfamily. Requires Ca(2+) as cofactor. It depends on Mg(2+) as a cofactor. In terms of tissue distribution, expressed by the venom duct.

The protein localises to the secreted. Functionally, conantokins inhibit N-methyl-D-aspartate (NMDA) receptors. This toxin is selective for the NR2B/GRIN2B subunit. Induces sleep-like symptoms in young mice and hyperactivity in older mice. The chain is Conantokin-G from Conus geographus (Geography cone).